The chain runs to 348 residues: Serpentine receptor class alpha-29 (348 aa).

Helical transmembrane passes span 28–48, 108–130, 145–165, 193–213, 246–266, and 280–300; these read FILMIIVVSFITTALAVQTLW, FLYYQTALFSSFYCVSLFLDRLF, GFIVFLILQIICPIAIQFWTF, INDSRIIIMGTIFMCSLFLYI, CIIIFSQITCLGITSFVPSIF, and LILAFMAGATYSNFFLPLIVI.

It belongs to the nematode receptor-like protein sra family.

The protein resides in the membrane. The protein is Serpentine receptor class alpha-29 (sra-29) of Caenorhabditis elegans.